We begin with the raw amino-acid sequence, 348 residues long: Alternative squalene epoxidase (348 aa).

Positions 1 to 10 (MLVDRVENNE) are enriched in basic and acidic residues. Positions 1 to 26 (MLVDRVENNEKQQQQMASSSDAMSDS) are disordered. The segment covering 12 to 26 (QQQQMASSSDAMSDS) has biased composition (low complexity). The next 3 membrane-spanning stretches (helical) occupy residues 55 to 75 (AIAWSGALVWPLMLTVPLLLS), 105 to 125 (LGLVLGILAVAVGQVFVWIFF), and 153 to 173 (GLLTHIGQPEGFVLLIGYLAI). One can recognise a Fatty acid hydroxylase domain in the interval 197–332 (FMCLVLQDGI…FMWFDQLGGT (136 aa)). The Histidine box-1 motif lies at 211-215 (HVLEH). A Histidine box-2 motif is present at residues 226-230 (HKPHH). 2 helical membrane passes run 243-263 (GSLMDTFCMIIIPLFVTANLV) and 277-297 (SYACWLTLIHSEYVFPWDGIF). A Histidine box-3 motif is present at residues 308–312 (HHVHH).

Belongs to the sterol desaturase family. As to quaternary structure, interacts with cytochrome b5/PHATRDRAFT_30770. It depends on Fe cation as a cofactor.

The protein resides in the endoplasmic reticulum membrane. The catalysed reaction is squalene + 2 Fe(II)-[cytochrome b5] + O2 + 2 H(+) = (S)-2,3-epoxysqualene + 2 Fe(III)-[cytochrome b5] + H2O. The protein operates within terpene metabolism; lanosterol biosynthesis; lanosterol from farnesyl diphosphate. The activity of this enzyme is not inhibited by terbinafine, an established inhibitor of the conventional flavoprotein squalene epoxidase. Its function is as follows. Catalyzes the stereospecific epoxidation of squalene at the terminal double bond to form (S)-2,3-epoxysqualene, the first oxygenation step in sterol biosynthesis. This Phaeodactylum tricornutum (strain CCAP 1055/1) protein is Alternative squalene epoxidase.